The sequence spans 512 residues: 2,3-bisphosphoglycerate-independent phosphoglycerate mutase (512 aa).

Mn(2+) is bound by residues aspartate 14 and serine 64. The Phosphoserine intermediate role is filled by serine 64. Substrate is bound by residues histidine 125, 155-156 (RD), arginine 187, arginine 193, 259-262 (RADR), and lysine 332. Aspartate 399, histidine 403, aspartate 440, histidine 441, and histidine 459 together coordinate Mn(2+).

The protein belongs to the BPG-independent phosphoglycerate mutase family. As to quaternary structure, monomer. Mn(2+) serves as cofactor.

It catalyses the reaction (2R)-2-phosphoglycerate = (2R)-3-phosphoglycerate. Its pathway is carbohydrate degradation; glycolysis; pyruvate from D-glyceraldehyde 3-phosphate: step 3/5. Its function is as follows. Catalyzes the interconversion of 2-phosphoglycerate and 3-phosphoglycerate. The sequence is that of 2,3-bisphosphoglycerate-independent phosphoglycerate mutase from Vesicomyosocius okutanii subsp. Calyptogena okutanii (strain HA).